Consider the following 328-residue polypeptide: MISLREFIFSNNVNKYISKEDLYSLFIIIELTSKIIHNYIILNNITRIKQEKIKKNIHGEHQTKLDLLSNKKFIDMIKTHYNIAGIASEEEAKFISFKQEKYGKYIFLIDPLDGSLSADCNTPVGTIFSLYCRVTPIGVEISEKDFLQPGNKQILSGYILYGSSTILVFTVKSGVHIFTYHPFFSTFFLSKKNFNYPKKNNIYSINEANYNNFSLGIKKYIMSCKSNNNISSRYTGSLVADFHRNLIKGGIYLYPNTKIYKHGKLRLMYECNPIALISSQANGSSSDGNINILDINPKILHQCSPFFVGTKSMVKLVNKFILGYYNHN.

E89, D110, L112, and D113 together coordinate Mg(2+). Substrate-binding positions include N206, Y234, 252 to 254, and K264; that span reads YLY. E270 is a Mg(2+) binding site.

This sequence belongs to the FBPase class 1 family. In terms of assembly, homotetramer. The cofactor is Mg(2+).

The protein localises to the cytoplasm. The catalysed reaction is beta-D-fructose 1,6-bisphosphate + H2O = beta-D-fructose 6-phosphate + phosphate. The protein operates within carbohydrate biosynthesis; gluconeogenesis. This is Fructose-1,6-bisphosphatase class 1 from Wigglesworthia glossinidia brevipalpis.